The following is a 577-amino-acid chain: Cytidine monophosphate-N-acetylneuraminic acid hydroxylase (577 aa).

The propeptide occupies 1-4; it reads MMDR. The 99-residue stretch at 14 to 112 folds into the Rieske domain; sequence LSPAEVANLK…IEMDENNGLS (99 aa). Residues cysteine 54, histidine 56, cysteine 75, and histidine 78 each coordinate [2Fe-2S] cluster.

Belongs to the CMP-Neu5Ac hydroxylase family. The cofactor is [2Fe-2S] cluster. As to expression, expressed in all tissues tested, except in brain.

It localises to the cytoplasm. The protein resides in the endoplasmic reticulum. It carries out the reaction CMP-N-acetyl-beta-neuraminate + 2 Fe(II)-[cytochrome b5] + O2 + 2 H(+) = CMP-N-glycoloyl-beta-neuraminate + 2 Fe(III)-[cytochrome b5] + H2O. The protein operates within amino-sugar metabolism; N-acetylneuraminate metabolism. Its function is as follows. Sialic acids are components of carbohydrate chains of glycoconjugates and are involved in cell-cell recognition and cell-pathogen interactions. Catalyzes the conversion of CMP-N-acetylneuraminic acid (CMP-Neu5Ac) into its hydroxylated derivative CMP-N-glycolylneuraminic acid (CMP-Neu5Gc), a sialic acid abundantly expressed at the surface of many cells. This chain is Cytidine monophosphate-N-acetylneuraminic acid hydroxylase (Cmah), found in Mus musculus (Mouse).